A 178-amino-acid polypeptide reads, in one-letter code: Large ribosomal subunit protein uL10 (178 aa).

This sequence belongs to the universal ribosomal protein uL10 family. Part of the ribosomal stalk of the 50S ribosomal subunit. The N-terminus interacts with L11 and the large rRNA to form the base of the stalk. The C-terminus forms an elongated spine to which L12 dimers bind in a sequential fashion forming a multimeric L10(L12)X complex.

Forms part of the ribosomal stalk, playing a central role in the interaction of the ribosome with GTP-bound translation factors. This chain is Large ribosomal subunit protein uL10, found in Thermosynechococcus vestitus (strain NIES-2133 / IAM M-273 / BP-1).